Here is a 352-residue protein sequence, read N- to C-terminus: Invasion chromosome antigen T (352 aa).

This sequence belongs to the IcaT/YfdF family.

The protein resides in the secreted. Functionally, may contribute to pathogenesis, although some of its characteristics suggest it is a fossil gene. The polypeptide is Invasion chromosome antigen T (Shigella flexneri serotype 5a (strain M90T)).